The following is a 106-amino-acid chain: L-rhamnose mutarotase (106 aa).

Y20 serves as a coordination point for substrate. The Proton donor role is filled by H24. Residues Y43 and 78–79 contribute to the substrate site; that span reads WW.

Belongs to the rhamnose mutarotase family. Homodimer.

The protein localises to the cytoplasm. The enzyme catalyses alpha-L-rhamnose = beta-L-rhamnose. The protein operates within carbohydrate degradation; L-rhamnose degradation. In terms of biological role, involved in the anomeric conversion of L-rhamnose. The protein is L-rhamnose mutarotase (rhaM) of Rhizobium leguminosarum bv. trifolii.